A 92-amino-acid polypeptide reads, in one-letter code: MVKNSFISIISQEQEEKEENKGSVEFQVFSFTNKIRRLTSHLGLHKKDFSSQRGLRIILGKRQRLLAYLSKKNRVRYKKLIGQLDIREPKTR.

This sequence belongs to the universal ribosomal protein uS15 family. Part of the 30S ribosomal subunit.

It localises to the plastid. The protein localises to the chloroplast. This Lemna minor (Common duckweed) protein is Small ribosomal subunit protein uS15c (rps15-A).